Reading from the N-terminus, the 591-residue chain is Phosphoglucan phosphatase LSF1, chloroplastic (591 aa).

Residues 1-61 (MAFLQQISGL…RRRRVVLRVV (61 aa)) constitute a chloroplast transit peptide. The region spanning 291–453 (RYSKITEQIY…VDDGKHDGTP (163 aa)) is the Tyrosine-protein phosphatase domain. Cys-390 serves as the catalytic Phosphocysteine intermediate. 390 to 396 (CTTGFDR) contacts substrate.

The protein resides in the plastid. The protein localises to the chloroplast. Starch granule-associated phosphoglucan phosphatase involved in the control of starch accumulation. Participates in the regulation of the initial steps of starch degradation at the granule surface. May release a different set of phosphate groups from those removed by DSP4. This is Phosphoglucan phosphatase LSF1, chloroplastic (LSF1) from Arabidopsis thaliana (Mouse-ear cress).